The following is a 215-amino-acid chain: MSNNSRHYSAIDEAILQGQAMLETLFGKPVAQRENPAKGLSQPALTSAEKKQSIGFMRVNHSGEVCAQALYHGQMATAKNPAVRALFTTAAKEETDHLAWCQERLEELGGHTSYLNAFWYTNSFLIGLLAGLSGDPLSLGFVEETEKQVEIHLADHLRKIPSNDLKSRKIVEYMQQDEIQHGLNARSSGAKELPYLVKKLMAFHAKVMTTLAYWI.

Residues E64, E94, H97, E146, E178, and H181 each coordinate Fe cation.

This sequence belongs to the COQ7 family. Fe cation serves as cofactor.

It is found in the cell membrane. It catalyses the reaction a 5-methoxy-2-methyl-3-(all-trans-polyprenyl)benzene-1,4-diol + AH2 + O2 = a 3-demethylubiquinol + A + H2O. The protein operates within cofactor biosynthesis; ubiquinone biosynthesis. Its function is as follows. Catalyzes the hydroxylation of 2-nonaprenyl-3-methyl-6-methoxy-1,4-benzoquinol during ubiquinone biosynthesis. The polypeptide is 3-demethoxyubiquinol 3-hydroxylase (Coxiella burnetii (strain CbuG_Q212) (Coxiella burnetii (strain Q212))).